The sequence spans 181 residues: Putative adenylate kinase (181 aa).

Residues G10, G12, K13, S14, and T15 each coordinate ATP. The segment at 35–58 (NITEVVSKNGLYLEKDIEMDSYVV) is NMP. The LID stretch occupies residues 106–116 (SRNYSSEKVKE). Positions 107 and 147 each coordinate ATP.

Belongs to the adenylate kinase family. AK6 subfamily. As to quaternary structure, interacts with uS11. Not a structural component of 40S pre-ribosomes, but transiently interacts with them by binding to uS11.

It catalyses the reaction AMP + ATP = 2 ADP. The catalysed reaction is ATP + H2O = ADP + phosphate + H(+). In terms of biological role, broad-specificity nucleoside monophosphate (NMP) kinase that catalyzes the reversible transfer of the terminal phosphate group between nucleoside triphosphates and monophosphates. Also has ATPase activity. Involved in the late maturation steps of the 30S ribosomal particles, specifically 16S rRNA maturation. While NMP activity is not required for ribosome maturation, ATPase activity is. Associates transiently with small ribosomal subunit protein uS11. ATP hydrolysis breaks the interaction with uS11. May temporarily remove uS11 from the ribosome to enable a conformational change of the ribosomal RNA that is needed for the final maturation step of the small ribosomal subunit. The polypeptide is Putative adenylate kinase (Methanococcus maripaludis (strain C7 / ATCC BAA-1331)).